Here is a 224-residue protein sequence, read N- to C-terminus: Ribose-5-phosphate isomerase A (224 aa).

Residues 26-29 (TGST), 81-84 (DGAD), and 94-97 (KGGG) contribute to the substrate site. Glutamate 103 (proton acceptor) is an active-site residue. Lysine 121 contributes to the substrate binding site.

The protein belongs to the ribose 5-phosphate isomerase family. As to quaternary structure, homodimer.

It catalyses the reaction aldehydo-D-ribose 5-phosphate = D-ribulose 5-phosphate. The protein operates within carbohydrate degradation; pentose phosphate pathway; D-ribose 5-phosphate from D-ribulose 5-phosphate (non-oxidative stage): step 1/1. Its function is as follows. Catalyzes the reversible conversion of ribose-5-phosphate to ribulose 5-phosphate. In Listeria monocytogenes serotype 4b (strain CLIP80459), this protein is Ribose-5-phosphate isomerase A.